The primary structure comprises 426 residues: Putative two-component response regulator ARR20 (426 aa).

Positions Ser40–Tyr155 constitute a Response regulatory domain. Asp91 carries the post-translational modification 4-aspartylphosphate. Positions Lys161–Trp216 are disordered. Residues Ser175–Glu193 are compositionally biased toward acidic residues. A compositionally biased stretch (basic and acidic residues) spans Glu194 to Pro208. A Nuclear localization signal motif is present at residues Lys210 to Arg213. The myb-like GARP DNA-binding region spans Arg213 to Arg268.

This sequence belongs to the ARR family. Type-B subfamily. Binds the target DNA as a monomer. Two-component system major event consists of a His-to-Asp phosphorelay between a sensor histidine kinase (HK) and a response regulator (RR). In plants, the His-to-Asp phosphorelay involves an additional intermediate named Histidine-containing phosphotransfer protein (HPt). This multistep phosphorelay consists of a His-Asp-His-Asp sequential transfer of a phosphate group between first a His and an Asp of the HK protein, followed by the transfer to a conserved His of the HPt protein and finally the transfer to an Asp in the receiver domain of the RR protein. As to expression, predominantly expressed in mature pistil tip. Also detected in the shoot apical meristem as well as vascular tissue and hydathodes of the leaves.

It is found in the nucleus. Putative transcriptional activator that binds specifically to the DNA sequence 5'-[AG]GATT-3'. Functions as a response regulator involved in His-to-Asp phosphorelay signal transduction system. Phosphorylation of the Asp residue in the receiver domain activates the ability of the protein to promote the transcription of target genes. Could directly activate some type-A response regulators in response to cytokinins. The sequence is that of Putative two-component response regulator ARR20 (ARR20) from Arabidopsis thaliana (Mouse-ear cress).